The primary structure comprises 254 residues: Alcohol dehydrogenase 2 (254 aa).

10 to 33 (FVAGLGGIGLDTSREIVKSGPKNL) is a binding site for NAD(+). Ser138 lines the substrate pocket. Tyr151 functions as the Proton acceptor in the catalytic mechanism.

This sequence belongs to the short-chain dehydrogenases/reductases (SDR) family. In terms of assembly, homodimer.

The catalysed reaction is a primary alcohol + NAD(+) = an aldehyde + NADH + H(+). The enzyme catalyses a secondary alcohol + NAD(+) = a ketone + NADH + H(+). The polypeptide is Alcohol dehydrogenase 2 (Adh2) (Drosophila montana (Fruit fly)).